Here is a 256-residue protein sequence, read N- to C-terminus: Triosephosphate isomerase (256 aa).

10–12 (NWK) is a substrate binding site. His96 acts as the Electrophile in catalysis. Residue Glu168 is the Proton acceptor of the active site. 2 residues coordinate substrate: Gly174 and Ser213.

Belongs to the triosephosphate isomerase family. In terms of assembly, homodimer.

The protein localises to the cytoplasm. It catalyses the reaction D-glyceraldehyde 3-phosphate = dihydroxyacetone phosphate. Its pathway is carbohydrate biosynthesis; gluconeogenesis. It participates in carbohydrate degradation; glycolysis; D-glyceraldehyde 3-phosphate from glycerone phosphate: step 1/1. Its function is as follows. Involved in the gluconeogenesis. Catalyzes stereospecifically the conversion of dihydroxyacetone phosphate (DHAP) to D-glyceraldehyde-3-phosphate (G3P). This chain is Triosephosphate isomerase, found in Wigglesworthia glossinidia brevipalpis.